Reading from the N-terminus, the 162-residue chain is Putative 4-hydroxy-4-methyl-2-oxoglutarate aldolase (162 aa).

Substrate is bound by residues 75–78 (GDML) and Arg-97. Asp-98 lines the a divalent metal cation pocket.

This sequence belongs to the class II aldolase/RraA-like family. As to quaternary structure, homotrimer. The cofactor is a divalent metal cation.

It catalyses the reaction 4-hydroxy-4-methyl-2-oxoglutarate = 2 pyruvate. The catalysed reaction is oxaloacetate + H(+) = pyruvate + CO2. In terms of biological role, catalyzes the aldol cleavage of 4-hydroxy-4-methyl-2-oxoglutarate (HMG) into 2 molecules of pyruvate. Also contains a secondary oxaloacetate (OAA) decarboxylase activity due to the common pyruvate enolate transition state formed following C-C bond cleavage in the retro-aldol and decarboxylation reactions. This is Putative 4-hydroxy-4-methyl-2-oxoglutarate aldolase from Azotobacter vinelandii (strain DJ / ATCC BAA-1303).